Consider the following 135-residue polypeptide: Small ribosomal subunit protein bS16m (135 aa).

The transit peptide at 1 to 34 (MVQLTTIFCKAYHGGHLTIRLALGGCTNRPFYRI) directs the protein to the mitochondrion.

Belongs to the bacterial ribosomal protein bS16 family. Component of the mitochondrial ribosome small subunit (28S) which comprises a 12S rRNA and about 30 distinct proteins.

The protein localises to the mitochondrion. The protein is Small ribosomal subunit protein bS16m (Mrps16) of Mus musculus (Mouse).